We begin with the raw amino-acid sequence, 345 residues long: Putative F-box protein At3g17265 (345 aa).

Positions 1–46 (MMFAYLPPDLESEILSRVPATFLKELQTTCKRWYALFRDPIFVKKN) constitute an F-box domain.

This chain is Putative F-box protein At3g17265, found in Arabidopsis thaliana (Mouse-ear cress).